The sequence spans 109 residues: Period circadian protein (109 aa).

Composition is skewed to polar residues over residues 42–56 and 68–80; these read QSYS…NLSP and SSRN…NLNM. A disordered region spans residues 42-109; that stretch reads QSYSTPANTG…LVTLTESLLK (68 aa). The segment covering 81–97 has biased composition (low complexity); sequence GSVTNTSNTGTGTSSGS.

As to quaternary structure, forms a heterodimer with timeless (TIM); the complex then translocates into the nucleus. In terms of processing, phosphorylated with a circadian rhythmicity, probably by the double-time protein (dbt). Phosphorylation could be implicated in the stability of per monomer and in the formation of heterodimer per-tim.

It is found in the nucleus. The protein localises to the cytoplasm. Its subcellular location is the perinuclear region. In terms of biological role, essential for biological clock functions. Determines the period length of circadian and ultradian rhythms; an increase in PER dosage leads to shortened circadian rhythms and a decrease leads to lengthened circadian rhythms. Essential for the circadian rhythmicity of locomotor activity, eclosion behavior, and for the rhythmic component of the male courtship song that originates in the thoracic nervous system. The biological cycle depends on the rhythmic formation and nuclear localization of the TIM-PER complex. Light induces the degradation of TIM, which promotes elimination of PER. Nuclear activity of the heterodimer coordinatively regulates PER and TIM transcription through a negative feedback loop. Behaves as a negative element in circadian transcriptional loop. Does not appear to bind DNA, suggesting indirect transcriptional inhibition. In Musca domestica (House fly), this protein is Period circadian protein (per).